Reading from the N-terminus, the 881-residue chain is Dynamin-like GTPase MGM1, mitochondrial (881 aa).

The transit peptide at 1–59 (MNASPVRLLILRRQLATHPAILYSSPYIKSPLVHLHSRMSNVHRSAHANALSFVITRRS) directs the protein to the mitochondrion. Over 60–72 (ISHFPKIISKIIR) the chain is Mitochondrial matrix. The chain crosses the membrane as a helical; Signal-anchor for type II membrane protein span at residues 73–92 (LPIYVGGGMAAAGSYIAYKM). Topologically, residues 93–881 (EEASSFTKDK…KSYKGVSKNL (789 aa)) are mitochondrial intermembrane. The tract at residues 145-183 (ATSLDDDESKRQGDPKDDDDEDDDDEDDENDSVDTTQDE) is disordered. Acidic residues predominate over residues 160–176 (KDDDDEDDDDEDDENDS). In terms of domain architecture, Dynamin-type G spans 207-505 (HLTLPSIVVI…LEISMSNALE (299 aa)). Positions 217–224 (GSQSSGKS) are G1 motif. Residues S220, S221, G222, K223, S224, S225, and G239 each coordinate GTP. S224 is a binding site for Mg(2+). Positions 243–245 (VTR) are G2 motif. T244 and D317 together coordinate Mg(2+). The tract at residues 317-320 (DLPG) is G3 motif. The tract at residues 385-388 (TKLD) is G4 motif. GTP contacts are provided by K386, D388, and T415. The segment at 414–417 (ITKT) is G5 motif. The tract at residues 668–780 (STADQVENCI…KMLKNKCHST (113 aa)) is paddle region. A disulfide bridge links C777 with C786. Positions 780 to 872 (TIEKDRCPEV…KIDSILVFKK (93 aa)) constitute a GED domain.

It belongs to the TRAFAC class dynamin-like GTPase superfamily. Dynamin/Fzo/YdjA family. As to quaternary structure, oligomeric complex consisting of membrane-bound and soluble forms of MGM1. Associates with FZO1 through interaction with the intermembrane space domain of UGO1 which binds FZO1 through its cytoplasmic domain. In terms of processing, cleavage of the transit peptide by mitochondrial processing protease (MPP) produces a long integral membrane form of MGM1 (l-MGM1). Further processing by the rhomboid protease PCP1 produces a short peripheral membrane form of MGM1 (s-MGM1). Both isoforms are required for full activity.

It is found in the mitochondrion inner membrane. The protein localises to the mitochondrion intermembrane space. The enzyme catalyses GTP + H2O = GDP + phosphate + H(+). Dynamin-related GTPase that is essential for normal mitochondrial morphology by mediating fusion of the mitochondrial inner membranes, regulating cristae morphology and maintaining respiratory chain function. Exists in two forms: the transmembrane, long form (Dynamin-like GTPase MGM1, long form; L-MGM1), which is tethered to the inner mitochondrial membrane, and the short soluble form (Dynamin-like GTPase MGM1, short form; S-MGM1), which results from proteolytic cleavage and localizes in the intermembrane space. Both forms (L-MGM1 and S-MGM1) cooperate to catalyze the fusion of the mitochondrial inner membrane. The equilibrium between L-MGM1 and S-MGM1 is essential: excess levels of S-MGM1, following loss of mitochondrial membrane potential, lead to an impaired equilibrium between L-MGM1 and S-MGM1, inhibiting mitochondrial fusion. Plays a role in the maintenance and remodeling of mitochondrial cristae, some invaginations of the mitochondrial inner membrane that provide an increase in the surface area. Probably acts by forming helical filaments at the inside of inner membrane tubes with the shape and dimensions of crista junctions. Its function is as follows. Constitutes the transmembrane long form (L-MGM1) that plays a central role in mitochondrial inner membrane fusion and cristae morphology. L-MGM1 and the soluble short form (S-MGM1) form higher-order helical assemblies that coordinate the fusion of mitochondrial inner membranes. Inner membrane-anchored L-MGM1 molecules initiate membrane remodeling by recruiting soluble S-MGM1 to rapidly polymerize into a flexible cylindrical scaffold encaging the mitochondrial inner membrane. Once at the membrane surface, the formation of S-MGM1 helices induce bilayer curvature. MGM1 dimerization through the paddle region, which inserts into cardiolipin-containing membrane, promotes GTP hydrolysis and the helical assembly of a flexible MGM1 lattice on the membrane, which drives membrane curvature and mitochondrial fusion. Functionally, constitutes the soluble short form (S-MGM1) generated by cleavage by PCP1, which plays a central role in mitochondrial inner membrane fusion and cristae morphology. The transmembrane long form (L-MGM1) and the S-MGM1 form higher-order helical assemblies that coordinate the fusion of mitochondrial inner membranes. Inner membrane-anchored L-MGM1 molecules initiate membrane remodeling by recruiting soluble S-MGM1 to rapidly polymerize into a flexible cylindrical scaffold encaging the mitochondrial inner membrane. Once at the membrane surface, the formation of S-MGM1 helices induce bilayer curvature. MGM1 dimerization through the paddle region, which inserts into cardiolipin-containing membrane, promotes GTP hydrolysis and the helical assembly of a flexible MGM1 lattice on the membrane, which drives membrane curvature and mitochondrial fusion. Excess levels of S-MGM1 produced by cleavage by PCP1 following stress conditions that induce loss of mitochondrial membrane potential, lead to an impaired equilibrium between L-MGM1 and S-MGM1, thereby inhibiting mitochondrial fusion. The chain is Dynamin-like GTPase MGM1, mitochondrial from Saccharomyces cerevisiae (strain ATCC 204508 / S288c) (Baker's yeast).